Reading from the N-terminus, the 506-residue chain is MSVEPPPELEEKAASEPEAGAMPEKRAGAQAAGSTWLQGFGRPSVYHAAIVIFLEFFAWGLLTTPMLTVLHETFSQHTFLMNGLIQGVKGLLSFLSAPLIGALSDVWGRKPFLLGTVFFTCFPIPLMRISPWWYFAMISVSGVFSVTFSVIFAYVADVTQEHERSTAYGWVSATFAASLVSSPAIGAYLSASYGDSLVVLVATVVALLDICFILVAVPESLPEKMRPVSWGAQISWKQADPFASLKKVGKDSTVLLICITVFLSYLPEAGQYSSFFLYLRQVIGFGSVKIAAFIAMVGILSIVAQTAFLSILMRSLGNKNTVLLGLGFQMLQLAWYGFGSQAWMMWAAGTVAAMSSITFPAISALVSRNAESDQQGVAQGIITGIRGLCNGLGPALYGFIFYMFHVELTELGPKLNSNNVPLQGAVIPGPPFLFGACIVLMSFLVALFIPEYSKASGVQKHSNSSSGSLTNTPERGSDEDIEPLLQDSSIWELSSFEEPGNQCTEL.

The disordered stretch occupies residues methionine 1 to lysine 25. Over methionine 1–alanine 49 the chain is Extracellular. The helical transmembrane segment at isoleucine 50–leucine 70 threads the bilayer. Over histidine 71–asparagine 82 the chain is Cytoplasmic. Residues glycine 83–leucine 103 form a helical membrane-spanning segment. At serine 104–proline 111 the chain is on the extracellular side. A helical membrane pass occupies residues phenylalanine 112–tryptophan 132. Over tryptophan 133–tyrosine 134 the chain is Cytoplasmic. A helical transmembrane segment spans residues phenylalanine 135–valine 155. The Extracellular portion of the chain corresponds to alanine 156–tyrosine 168. A helical membrane pass occupies residues glycine 169–leucine 189. At serine 190 to serine 196 the chain is on the cytoplasmic side. Residues leucine 197 to valine 217 traverse the membrane as a helical segment. The Extracellular segment spans residues proline 218–leucine 255. The helical transmembrane segment at leucine 256 to phenylalanine 276 threads the bilayer. Residues leucine 277–glutamine 281 lie on the Cytoplasmic side of the membrane. A helical membrane pass occupies residues valine 282–isoleucine 302. Over valine 303 to lysine 319 the chain is Extracellular. A helical transmembrane segment spans residues asparagine 320 to serine 340. Glutamine 341 is a topological domain (cytoplasmic). A helical transmembrane segment spans residues alanine 342 to isoleucine 362. Residues serine 363–glycine 387 lie on the Extracellular side of the membrane. A helical transmembrane segment spans residues leucine 388 to leucine 408. Over threonine 409 to proline 428 the chain is Cytoplasmic. The helical transmembrane segment at glycine 429–isoleucine 449 threads the bilayer. Over proline 450–leucine 506 the chain is Extracellular. Positions glycine 457–isoleucine 481 are disordered. A compositionally biased stretch (polar residues) spans glutamine 459–glutamate 474. An N-linked (GlcNAc...) asparagine glycan is attached at asparagine 463.

It belongs to the major facilitator superfamily.

It is found in the membrane. This Homo sapiens (Human) protein is Hippocampus abundant transcript-like protein 1.